A 535-amino-acid polypeptide reads, in one-letter code: Cytochrome P450 monooxygenase atE (535 aa).

A heme-binding site is contributed by Cys455.

Belongs to the cytochrome P450 family. The cofactor is heme.

The catalysed reaction is 3-methylcatechol + AH2 + O2 = 3-methylbenzene-1,2,4-triol + A + H2O. It participates in secondary metabolite biosynthesis. In terms of biological role, cytochrome P450 monooxygenase; part of the gene cluster that mediates the biosynthesis of terreic acid, a quinone epoxide inhibitor of Bruton's tyrosine kinase. The first step of the pathway is the synthesis of 6-methylsalicylic acid (6-MSA) by the 6-methylsalicylic acid synthase atX. In the biosynthesis of 6-MSA, atX utilizes one acetyl-CoA and three malonyl-CoAs as its substrates and catalyzes a series of programmed reactions including Claisen condensation, reduction, aldol cyclization, and the hydrolytic cleavage that yields 6-MSA. The 6-methylsalicylate 1-monooxygenase atA then catalyzes the decarboxylative hydroxylation of 6-MSA to 3-methylcatechol. The next step is the conversion of 3-methylcatechol to 3-methyl-1,2,4-benzenetriol by cytochrome P450 monooxygenase atE, which is enhanced by cytochrome P450 monooxygenase atG. Then, the epoxidase atD catalyzes the epoxidation and hydroxyl oxidation of 3-methyl-1,2,4-benzenetriol to terremutin. Lastly, GMC oxidoreductase atC oxidizes terremutin to terreic acid. The chain is Cytochrome P450 monooxygenase atE from Aspergillus terreus (strain NIH 2624 / FGSC A1156).